Consider the following 75-residue polypeptide: MKRFFIGCIRLYQKFISPLTPPTCRFYPTCSHYGIEAIQRFGVLKGGWLTIKRISKCHPFHRGGIDPVPEKKQEK.

The protein belongs to the UPF0161 family.

The protein resides in the cell membrane. In terms of biological role, could be involved in insertion of integral membrane proteins into the membrane. The sequence is that of Putative membrane protein insertion efficiency factor from Halalkalibacterium halodurans (strain ATCC BAA-125 / DSM 18197 / FERM 7344 / JCM 9153 / C-125) (Bacillus halodurans).